The primary structure comprises 558 residues: Nuclear speckle splicing regulatory protein 1 (558 aa).

The interval 21 to 54 (PVLQKPSVFGNDSDDDDETSVSESLQREAAKKQA) is disordered. 2 positions are modified to phosphoserine: serine 27 and serine 33. Residues 104–170 (IHNLLKAVEI…REKRAAALEA (67 aa)) are a coiled coil. A necessary for alternative splicing activity region spans residues 106-170 (NLLKAVEIRK…REKRAAALEA (65 aa)). Glycyl lysine isopeptide (Lys-Gly) (interchain with G-Cter in SUMO2) cross-links involve residues lysine 199 and lysine 210. Residues 204–215 (EARSGIKEEKSR) show a composition bias toward basic and acidic residues. The tract at residues 204–534 (EARSGIKEEK…KRNNEETVMS (331 aa)) is disordered. Residues 216–226 (GFSNEVSSKNR) are compositionally biased toward polar residues. Serine 248, serine 254, and serine 255 each carry phosphoserine. The span at 250-280 (FDAKSSADDEIEETRVNCRREKVIETPENDF) shows a compositional bias: basic and acidic residues. Position 275 is a phosphothreonine (threonine 275). A Glycyl lysine isopeptide (Lys-Gly) (interchain with G-Cter in SUMO2) cross-link involves residue lysine 281. Over residues 299–310 (STRHHTKGSRTS) the composition is skewed to basic residues. Composition is skewed to basic and acidic residues over residues 311 to 442 (RGHE…KREV), 449 to 487 (RNQD…RNQE), and 501 to 517 (RLTE…ERPP). The stretch at 379-427 (KREKDREKYSQREQERDRQQNDQNRPSEKGEKEEKSKAKEEHMKVRKER) forms a coiled coil. Serine 457 carries the phosphoserine modification.

The protein belongs to the NSRP1 family. As to quaternary structure, interacts (via C-terminus) with SRSF1. Interacts (via C-terminus) with SRSF2. In terms of tissue distribution, expressed in dendritic cells, T-cells, B-cells and natural killer cells. Expressed in secondary lymphoid organs such as spleen and mesenteric, axillary and brachial lymph nodes.

It localises to the nucleus. The protein resides in the nucleus speckle. Functionally, RNA-binding protein that mediates pre-mRNA alternative splicing regulation. The protein is Nuclear speckle splicing regulatory protein 1 (NSRP1) of Homo sapiens (Human).